Here is a 1487-residue protein sequence, read N- to C-terminus: Collagen alpha-1(II) chain (1487 aa).

Residues 1-25 form the signal peptide; sequence MIRLGAPQSLVLLTLLIAAVLRCQG. The propeptide at 26–181 is N-terminal propeptide; that stretch reads QDAQEAGSCL…PGLSAGNFAA (156 aa). The VWFC domain occupies 32–89; it reads GSCLQNGQRYKDKDVWKPSSCRICVCDTGNVLCDDIICEDPDCLNPEIPFGECCPICP. Residues 96 to 179 form a disordered region; the sequence is SGKLGPKGQK…GPPGLSAGNF (84 aa). 2 stretches are compositionally biased toward basic and acidic residues: residues 104–115 and 132–153; these read QKGEPGDIRDII and PRGDRGDKGEKGAPGPRGRDGE. The span at 157–172 shows a compositional bias: pro residues; the sequence is PGNPGPAGPPGPPGPP. A 5-hydroxylysine modification is found at Lys190. O-linked (Gal...) hydroxylysine glycosylation is present at Lys190. The segment at 191–1237 is disordered; it reads AGGAQMGVMQ…QREKGPDPMQ (1047 aa). A compositionally biased stretch (low complexity) spans 192–203; it reads GGAQMGVMQGPM. A triple-helical region region spans residues 201–1214; sequence GPMGPMGPRG…PGPPGPPGPP (1014 aa). Over residues 208-217 the composition is skewed to pro residues; that stretch reads PRGPPGPAGA. The segment covering 218–239 has biased composition (low complexity); sequence PGPQGFQGNPGEPGEPGVSGPM. The segment covering 251-265 has biased composition (basic and acidic residues); that stretch reads PGDDGEAGKPGKSGE. 5-hydroxylysine occurs at positions 287, 299, and 308. 3 O-linked (Gal...) hydroxylysine glycosylation sites follow: Lys287, Lys299, and Lys308. 2 stretches are compositionally biased toward low complexity: residues 310–320 and 335–350; these read ESGSPGENGSP and TGPAGAAGARGNDGQP. Residues 360-369 are compositionally biased toward gly residues; the sequence is GPAGGPGFPG. Composition is skewed to low complexity over residues 370–382 and 403–431; these read APGAKGEAGPTGA and PAGASGNPGTDGIPGAKGSAGAPGIAGAP. Lys374 is modified (5-hydroxylysine). Residue Lys374 is glycosylated (O-linked (Gal...) hydroxylysine). Pro residues predominate over residues 433 to 442; the sequence is FPGPRGPPGP. Over residues 472 to 485 the composition is skewed to low complexity; the sequence is ETGPAGPQGAPGPA. Lys608 and Lys620 each carry 5-hydroxylysine. O-linked (Gal...) hydroxylysine glycosylation is found at Lys608 and Lys620. The span at 622–631 shows a compositional bias: low complexity; sequence LAGAPGLRGL. 4-hydroxyproline occurs at positions 659 and 668. The residue at position 670 (Pro670) is a 3-hydroxyproline. 4-hydroxyproline is present on residues Pro671 and Pro674. Residues 706 to 736 show a composition bias toward low complexity; that stretch reads ERGSPGAQGLQGPRGLPGTPGTDGPKGAAGP. The segment covering 764 to 775 has biased composition (basic and acidic residues); sequence KGDRGDVGEKGP. Low complexity-rich tracts occupy residues 833 to 848 and 877 to 914; these read AGFAGPPGADGQPGAK and PTGVTGPKGARGAQGPPGATGFPGAAGRVGPPGANGNP. Pro907 carries the 3-hydroxyproline modification. 4-hydroxyproline occurs at positions 908, 914, and 920. The segment covering 962-980 has biased composition (low complexity); it reads DGPSGLDGPPGPQGLAGQR. Residues 1069-1079 show a composition bias toward pro residues; sequence APGPPGSPGPA. Residues 1115-1129 are compositionally biased toward basic and acidic residues; it reads RGDKGESGEQGERGL. The residue at position 1144 (Pro1144) is a 3-hydroxyproline. 2 stretches are compositionally biased toward low complexity: residues 1148–1157 and 1171–1181; these read SGDQGASGPA and PSGKDGSNGIP. Pro1181 bears the 4-hydroxyproline mark. Pro1186 bears the 3-hydroxyproline mark. Pro1187 bears the 4-hydroxyproline mark. The segment covering 1199–1216 has biased composition (pro residues); that stretch reads VGPPGSPGPPGPPGPPGP. Pro1201 bears the 3-hydroxyproline mark. 4-hydroxyproline is present on residues Pro1202 and Pro1205. Pro1207 is subject to 3-hydroxyproline. Pro1208 and Pro1211 each carry 4-hydroxyproline. 3-hydroxyproline is present on Pro1213. Pro1214 bears the 4-hydroxyproline mark. The segment at 1215 to 1241 is nonhelical region (C-terminal); it reads GPGIDMSAFAGLGQREKGPDPMQYMRA. The 235-residue stretch at 1253–1487 folds into the Fibrillar collagen NC1 domain; it reads VEVDATLKSL…GVDIGPVCFL (235 aa). 3 cysteine pairs are disulfide-bonded: Cys1283–Cys1315, Cys1323–Cys1485, and Cys1393–Cys1438. Residues Asp1301, Asn1303, Gln1304, Cys1306, and Asp1309 each contribute to the Ca(2+) site.

This sequence belongs to the fibrillar collagen family. As to quaternary structure, homotrimers of alpha 1(II) chains. Contains mostly 4-hydroxyproline. Prolines at the third position of the tripeptide repeating unit (G-X-P) are 4-hydroxylated in some or all of the chains. Post-translationally, contains 3-hydroxyproline at a few sites. This modification occurs on the first proline residue in the sequence motif Gly-Pro-Hyp, where Hyp is 4-hydroxyproline. In terms of processing, lysine residues at the third position of the tripeptide repeating unit (G-X-Y) are 5-hydroxylated in some or all of the chains. O-glycosylated on hydroxylated lysine residues. The O-linked glycan consists of a Glc-Gal disaccharide.

The protein resides in the secreted. Its subcellular location is the extracellular space. It is found in the extracellular matrix. Its function is as follows. Type II collagen is specific for cartilaginous tissues. It is essential for the normal embryonic development of the skeleton, for linear growth and for the ability of cartilage to resist compressive forces. The polypeptide is Collagen alpha-1(II) chain (Mus musculus (Mouse)).